We begin with the raw amino-acid sequence, 475 residues long: Ribulose bisphosphate carboxylase large chain (475 aa).

Positions 1–2 (MS) are excised as a propeptide. Pro3 carries the N-acetylproline modification. The residue at position 14 (Lys14) is an N6,N6,N6-trimethyllysine. Substrate-binding residues include Asn123 and Thr173. Lys175 functions as the Proton acceptor in the catalytic mechanism. Lys177 contributes to the substrate binding site. Lys201, Asp203, and Glu204 together coordinate Mg(2+). The residue at position 201 (Lys201) is an N6-carboxylysine. His294 (proton acceptor) is an active-site residue. Substrate is bound by residues Arg295, His327, and Ser379.

This sequence belongs to the RuBisCO large chain family. Type I subfamily. In terms of assembly, heterohexadecamer of 8 large chains and 8 small chains; disulfide-linked. The disulfide link is formed within the large subunit homodimers. Mg(2+) serves as cofactor. The disulfide bond which can form in the large chain dimeric partners within the hexadecamer appears to be associated with oxidative stress and protein turnover.

The protein resides in the plastid. The protein localises to the chloroplast. It catalyses the reaction 2 (2R)-3-phosphoglycerate + 2 H(+) = D-ribulose 1,5-bisphosphate + CO2 + H2O. The catalysed reaction is D-ribulose 1,5-bisphosphate + O2 = 2-phosphoglycolate + (2R)-3-phosphoglycerate + 2 H(+). Its function is as follows. RuBisCO catalyzes two reactions: the carboxylation of D-ribulose 1,5-bisphosphate, the primary event in carbon dioxide fixation, as well as the oxidative fragmentation of the pentose substrate in the photorespiration process. Both reactions occur simultaneously and in competition at the same active site. The protein is Ribulose bisphosphate carboxylase large chain of Magnolia macrophylla (Bigleaf magnolia).